A 337-amino-acid chain; its full sequence is MIEIDGSFGEGGGQILRTSLTLSVITGKPFRIFNIRANRPNPGLQRQHLWAVRAMKMISNAETKGDEVGSKELTFIPHEIKGNSIIDIDIGTAGSVTLIMQTMIPAIINKNMRIKIKGGTDVPKSPTIDYIRLVYLEILRKIGIESKVNLIKRGHYPEGGGEVIIENVNGNPSDFSLLELGKLIMIKGISHVSSLPSHIAERQKDSAKAILSKLGVQIEIETDVRQGEVSKGSGIALAAIGEKSIIGADSLGERGKRAEIVGEEAARKLIDNLNTKAAVDVHMSDMLMIFTSLFGGEYIGAELTSHAYTNMEIIRKFLDVKIEISGKRPFRFKAKIF.

ATP is bound by residues Gln101 and 282 to 285 (HMSD). The Tele-AMP-histidine intermediate role is filled by His306.

This sequence belongs to the RNA 3'-terminal cyclase family. Type 1 subfamily.

The protein localises to the cytoplasm. The enzyme catalyses a 3'-end 3'-phospho-ribonucleotide-RNA + ATP = a 3'-end 2',3'-cyclophospho-ribonucleotide-RNA + AMP + diphosphate. Catalyzes the conversion of 3'-phosphate to a 2',3'-cyclic phosphodiester at the end of RNA. The mechanism of action of the enzyme occurs in 3 steps: (A) adenylation of the enzyme by ATP; (B) transfer of adenylate to an RNA-N3'P to produce RNA-N3'PP5'A; (C) and attack of the adjacent 2'-hydroxyl on the 3'-phosphorus in the diester linkage to produce the cyclic end product. The biological role of this enzyme is unknown but it is likely to function in some aspects of cellular RNA processing. The polypeptide is RNA 3'-terminal phosphate cyclase (rtcA) (Saccharolobus solfataricus (strain ATCC 35092 / DSM 1617 / JCM 11322 / P2) (Sulfolobus solfataricus)).